The following is a 400-amino-acid chain: Acetate kinase (400 aa).

Residue Asn7 coordinates Mg(2+). Lys14 contacts ATP. Arg85 is a binding site for substrate. The active-site Proton donor/acceptor is the Asp142. Residues 202 to 206 (HLGNG), 278 to 280 (DMR), and 326 to 330 (GIGEN) contribute to the ATP site. Glu380 lines the Mg(2+) pocket.

This sequence belongs to the acetokinase family. As to quaternary structure, homodimer. The cofactor is Mg(2+). It depends on Mn(2+) as a cofactor.

It localises to the cytoplasm. The enzyme catalyses acetate + ATP = acetyl phosphate + ADP. It participates in metabolic intermediate biosynthesis; acetyl-CoA biosynthesis; acetyl-CoA from acetate: step 1/2. Catalyzes the formation of acetyl phosphate from acetate and ATP. Can also catalyze the reverse reaction. This is Acetate kinase from Deinococcus deserti (strain DSM 17065 / CIP 109153 / LMG 22923 / VCD115).